The following is a 663-amino-acid chain: Methionine--tRNA ligase (663 aa).

The 'HIGH' region signature appears at 13–23 (PYTNGPCHLGH). The Zn(2+) site is built by cysteine 144, cysteine 147, cysteine 156, and cysteine 160. Positions 326–330 (KFSKS) match the 'KMSKS' region motif. Residue lysine 329 coordinates ATP. A tRNA-binding domain is found at 565–663 (EFGKMKLIVG…QAVEPGTPIR (99 aa)).

The protein belongs to the class-I aminoacyl-tRNA synthetase family. MetG type 1 subfamily. Homodimer. The cofactor is Zn(2+).

It is found in the cytoplasm. It carries out the reaction tRNA(Met) + L-methionine + ATP = L-methionyl-tRNA(Met) + AMP + diphosphate. Functionally, is required not only for elongation of protein synthesis but also for the initiation of all mRNA translation through initiator tRNA(fMet) aminoacylation. The sequence is that of Methionine--tRNA ligase from Methanosphaerula palustris (strain ATCC BAA-1556 / DSM 19958 / E1-9c).